Here is a 148-residue protein sequence, read N- to C-terminus: MDTHNKDDSIIRFSVSLQQNLLDELDNRIIKNGYSSRSELVRDLIREKLVEDNWAEDNPNDESKIAVLVVIYDHHQRELNQRMIDIQHASGTHVLCTTHIHMDEHNCLETIILQGNSFEIQRLQLEIGGLRGVKFAKLTKASSFEYNE.

Ni(2+)-binding residues include H88, H99, H101, and C107.

This sequence belongs to the transcriptional regulatory CopG/NikR family. Ni(2+) is required as a cofactor.

Its function is as follows. Transcriptional regulator. This Helicobacter pylori (strain P12) protein is Putative nickel-responsive regulator.